The chain runs to 173 residues: Small ribosomal subunit protein uS10m (173 aa).

Belongs to the universal ribosomal protein uS10 family. Component of the mitochondrial ribosome small subunit (28S) which comprises a 12S rRNA and about 30 distinct proteins.

The protein resides in the mitochondrion. This is Small ribosomal subunit protein uS10m (mRpS10) from Drosophila melanogaster (Fruit fly).